Here is a 165-residue protein sequence, read N- to C-terminus: Putative glycine-rich cell wall structural protein 1 (165 aa).

The N-terminal stretch at 1-23 (MARKVIALAFLLLLTISLSKSNA) is a signal peptide. R2; Tyr-rich repeat units lie at residues 56–62 (GYGYGYG) and 93–99 (GYGYGYG). A disordered region spans residues 105–125 (AQGQGSGGGGGGGGGGGGGGS). The R2; Tyr-rich repeat unit spans residues 132 to 138 (GYGYGYG). The disordered stretch occupies residues 146–165 (GGGGGGGGGGGGSGYVGKHE).

It localises to the secreted. The protein resides in the cell wall. In terms of biological role, responsible for plasticity of the cell wall. The polypeptide is Putative glycine-rich cell wall structural protein 1 (GRP-1) (Oryza sativa subsp. indica (Rice)).